Here is a 295-residue protein sequence, read N- to C-terminus: Bifunctional protein FolD (295 aa).

Residues 166–168, Ser191, and Ile232 contribute to the NADP(+) site; that span reads GRS.

It belongs to the tetrahydrofolate dehydrogenase/cyclohydrolase family. In terms of assembly, homodimer.

The catalysed reaction is (6R)-5,10-methylene-5,6,7,8-tetrahydrofolate + NADP(+) = (6R)-5,10-methenyltetrahydrofolate + NADPH. It carries out the reaction (6R)-5,10-methenyltetrahydrofolate + H2O = (6R)-10-formyltetrahydrofolate + H(+). It participates in one-carbon metabolism; tetrahydrofolate interconversion. Catalyzes the oxidation of 5,10-methylenetetrahydrofolate to 5,10-methenyltetrahydrofolate and then the hydrolysis of 5,10-methenyltetrahydrofolate to 10-formyltetrahydrofolate. The protein is Bifunctional protein FolD of Rhodopseudomonas palustris (strain HaA2).